The sequence spans 599 residues: Chaperone protein DnaK (599 aa).

Residue Thr-187 is modified to Phosphothreonine; by autocatalysis. The tract at residues 575 to 599 (AQQAATENSKDSDTVEAEIVDDKAN) is disordered.

The protein belongs to the heat shock protein 70 family.

Acts as a chaperone. The sequence is that of Chaperone protein DnaK from Mycoplasmopsis pulmonis (strain UAB CTIP) (Mycoplasma pulmonis).